Reading from the N-terminus, the 71-residue chain is MSEQKAAEVNQLIEDISQKLNMLNIGVIKAEDFSPDKYEDIEFLHQMVMKKSSFSPSEMQAIASELKNLRK.

This sequence belongs to the UPF0435 family.

The polypeptide is UPF0435 protein BPUM_0734 (Bacillus pumilus (strain SAFR-032)).